The primary structure comprises 187 residues: Large ribosomal subunit protein uL13 (187 aa).

This sequence belongs to the universal ribosomal protein uL13 family.

The chain is Large ribosomal subunit protein uL13 (rpl13a) from Dictyostelium discoideum (Social amoeba).